Consider the following 138-residue polypeptide: Small ribosomal subunit protein uS12 (138 aa).

Residues 33 to 55 (KEHTNVSSPQKRGVCTRVGTMTP) form a disordered region. At Asp-102 the chain carries 3-methylthioaspartic acid.

This sequence belongs to the universal ribosomal protein uS12 family. Part of the 30S ribosomal subunit. Contacts proteins S8 and S17. May interact with IF1 in the 30S initiation complex.

Its function is as follows. With S4 and S5 plays an important role in translational accuracy. In terms of biological role, interacts with and stabilizes bases of the 16S rRNA that are involved in tRNA selection in the A site and with the mRNA backbone. Located at the interface of the 30S and 50S subunits, it traverses the body of the 30S subunit contacting proteins on the other side and probably holding the rRNA structure together. The combined cluster of proteins S8, S12 and S17 appears to hold together the shoulder and platform of the 30S subunit. The chain is Small ribosomal subunit protein uS12 from Bacillus licheniformis (strain ATCC 14580 / DSM 13 / JCM 2505 / CCUG 7422 / NBRC 12200 / NCIMB 9375 / NCTC 10341 / NRRL NRS-1264 / Gibson 46).